Reading from the N-terminus, the 509-residue chain is 3-octaprenyl-4-hydroxybenzoate carboxy-lyase (509 aa).

Asparagine 179 is a Mn(2+) binding site. Residues 182 to 184 (IYR), 196 to 198 (RWL), and 201 to 202 (RG) contribute to the prenylated FMN site. A Mn(2+)-binding site is contributed by glutamate 245. The active-site Proton donor is the aspartate 304.

This sequence belongs to the UbiD family. As to quaternary structure, homohexamer. The cofactor is prenylated FMN. Mn(2+) is required as a cofactor.

The protein localises to the cell membrane. The enzyme catalyses a 4-hydroxy-3-(all-trans-polyprenyl)benzoate + H(+) = a 2-(all-trans-polyprenyl)phenol + CO2. It participates in cofactor biosynthesis; ubiquinone biosynthesis. Catalyzes the decarboxylation of 3-octaprenyl-4-hydroxy benzoate to 2-octaprenylphenol, an intermediate step in ubiquinone biosynthesis. This chain is 3-octaprenyl-4-hydroxybenzoate carboxy-lyase, found in Cupriavidus pinatubonensis (strain JMP 134 / LMG 1197) (Cupriavidus necator (strain JMP 134)).